Consider the following 283-residue polypeptide: Ribosomal RNA small subunit methyltransferase A (283 aa).

S-adenosyl-L-methionine is bound by residues N29, L31, G56, E77, D102, and N123.

The protein belongs to the class I-like SAM-binding methyltransferase superfamily. rRNA adenine N(6)-methyltransferase family. RsmA subfamily.

Its subcellular location is the cytoplasm. It carries out the reaction adenosine(1518)/adenosine(1519) in 16S rRNA + 4 S-adenosyl-L-methionine = N(6)-dimethyladenosine(1518)/N(6)-dimethyladenosine(1519) in 16S rRNA + 4 S-adenosyl-L-homocysteine + 4 H(+). Its function is as follows. Specifically dimethylates two adjacent adenosines (A1518 and A1519) in the loop of a conserved hairpin near the 3'-end of 16S rRNA in the 30S particle. May play a critical role in biogenesis of 30S subunits. The sequence is that of Ribosomal RNA small subunit methyltransferase A from Acidobacterium capsulatum (strain ATCC 51196 / DSM 11244 / BCRC 80197 / JCM 7670 / NBRC 15755 / NCIMB 13165 / 161).